The sequence spans 480 residues: Acyl-lipid (8-3)-desaturase (480 aa).

Residues 1–30 (MAPHSADTAGLVPSDELRLRTSNSKGPEQE) are disordered. The region spanning 33–107 (LKKYTLEDVS…LAKYCIGELV (75 aa)) is the Cytochrome b5 heme-binding domain. Heme-binding residues include histidine 68 and histidine 90. Helical transmembrane passes span 151–171 (IHPH…ASYY) and 173–193 (AFFW…MGFF). The Histidine box-1 motif lies at 203-207 (HDGNH). The Histidine box-2 motif lies at 238 to 243 (HVVGHH). 3 consecutive transmembrane segments (helical) span residues 280 to 300 (IYLA…DDFL), 322 to 342 (IFFQ…SVYG), and 348 to 368 (TFLA…AFLF). The Histidine box-3 signature appears at 419–423 (QIEHH).

This sequence belongs to the fatty acid desaturase type 1 family. Requires Fe(2+) as cofactor.

Its subcellular location is the membrane. The catalysed reaction is an (8Z,11Z,14Z)-icosatrienoyl-containing glycerolipid + 2 Fe(II)-[cytochrome b5] + O2 + 2 H(+) = (5Z,8Z,11Z,14Z)-eicosatetraenoyl-containing glycerolipid + 2 Fe(III)-[cytochrome b5] + 2 H2O. It carries out the reaction an (8Z,11Z,14Z,17Z)-eicosatetraenoyl-containing glycerolipid + 2 Fe(II)-[cytochrome b5] + O2 + 2 H(+) = a (5Z,8Z,11Z,14Z,17Z)-eicosapentaenoyl-containing glycerolipid + 2 Fe(III)-[cytochrome b5] + 2 H2O. Fatty acid desaturase that introduces a cis double bond at the 5-position in 20-carbon polyunsaturated fatty acids incorporated in a glycerolipid that contain a Delta(8) double bond. The chain is Acyl-lipid (8-3)-desaturase from Physcomitrium patens (Spreading-leaved earth moss).